A 121-amino-acid chain; its full sequence is Large ribosomal subunit protein bL20 (121 aa).

This sequence belongs to the bacterial ribosomal protein bL20 family.

Binds directly to 23S ribosomal RNA and is necessary for the in vitro assembly process of the 50S ribosomal subunit. It is not involved in the protein synthesizing functions of that subunit. The protein is Large ribosomal subunit protein bL20 of Orientia tsutsugamushi (strain Boryong) (Rickettsia tsutsugamushi).